The primary structure comprises 672 residues: Transmembrane 9 superfamily member 2 (672 aa).

The signal sequence occupies residues 1–18; sequence MKRGVWLLIYCYATLTKG. Over 19-307 the chain is Extracellular; it reads FSLPGLSPTT…DKYLHIYDPQ (289 aa). Residues 308-328 form a helical membrane-spanning segment; sequence IQWFSLINFSVIVILLSSVVM. Over 329-383 the chain is Cytoplasmic; that stretch reads HSLLRALKSDLARYNELNLDNEFHEDSGWKLGHGDVFRTPSKSMLLSILVGSGMQ. A helical membrane pass occupies residues 384 to 404; the sequence is LFLMVMCSIFFAAVGLVSPVS. The Extracellular segment spans residues 405–410; that stretch reads RGSLPT. A helical membrane pass occupies residues 411-431; the sequence is VMFVLYALFGFVGSYASMGVY. Residues 432-447 are Cytoplasmic-facing; sequence KFFRGPYWKANMILTP. Residues 448-468 traverse the membrane as a helical segment; that stretch reads ILLPGAIFLLIVIMNFFLLFA. The Extracellular portion of the chain corresponds to 469 to 479; sequence HSSGVIPARSL. A helical membrane pass occupies residues 480–500; that stretch reads FFIILLWFLVSVPLSFAGSIV. The Cytoplasmic portion of the chain corresponds to 501–532; it reads AHKQCNWDEHPTKTNQIARQIPYQPWYLRTAQ. A helical membrane pass occupies residues 533–553; it reads ATLIAGIFSFGSIAVELYFIY. Over 554–565 the chain is Extracellular; the sequence is SSLWFNKIFYMF. A helical membrane pass occupies residues 566–586; the sequence is GFLLFSFLLLTLTTSLVTILI. Residues 587–601 are Cytoplasmic-facing; the sequence is TYYSLCLENWLWQWR. The helical transmembrane segment at 602-622 threads the bilayer; sequence SFIIGGLGCSIYTFIHSILFT. Residues 623-628 are Extracellular-facing; the sequence is KFKLGG. A helical membrane pass occupies residues 629 to 649; sequence VITVVLYLGYSLIISALCCVV. Residues 650–672 are Cytoplasmic-facing; it reads TGAIGFFSSMFFIRKIYSAIKVE.

It belongs to the nonaspanin (TM9SF) (TC 9.A.2) family.

It localises to the vacuole membrane. In terms of biological role, with EMP70 and TMN3, plays a critical role in the late stages of a nutrient-controlled pathway notably regulating FLO11 gene expression. Acts downstream of RAS2 and TOR. Essential for cell adhesion and filamentous growth. May play a role as effector of cellular copper homeostasis. The chain is Transmembrane 9 superfamily member 2 (TMN2) from Saccharomyces cerevisiae (strain ATCC 204508 / S288c) (Baker's yeast).